We begin with the raw amino-acid sequence, 132 residues long: Small ribosomal subunit protein uS8 (132 aa).

It belongs to the universal ribosomal protein uS8 family. In terms of assembly, part of the 30S ribosomal subunit. Contacts proteins S5 and S12.

Functionally, one of the primary rRNA binding proteins, it binds directly to 16S rRNA central domain where it helps coordinate assembly of the platform of the 30S subunit. This is Small ribosomal subunit protein uS8 from Lacticaseibacillus casei (strain BL23) (Lactobacillus casei).